Reading from the N-terminus, the 104-residue chain is L-rhamnose mutarotase (104 aa).

A substrate-binding site is contributed by Tyr18. His22 serves as the catalytic Proton donor. Substrate contacts are provided by residues Tyr41 and 76–77 (WW).

The protein belongs to the rhamnose mutarotase family. In terms of assembly, homodimer.

It localises to the cytoplasm. The catalysed reaction is alpha-L-rhamnose = beta-L-rhamnose. It participates in carbohydrate metabolism; L-rhamnose metabolism. Its function is as follows. Involved in the anomeric conversion of L-rhamnose. This chain is L-rhamnose mutarotase, found in Sinorhizobium medicae (strain WSM419) (Ensifer medicae).